We begin with the raw amino-acid sequence, 340 residues long: Guanine nucleotide-binding protein G(I)/G(S)/G(T) subunit beta-1 (340 aa).

N-acetylserine is present on Ser-2. Ser-2 is modified (phosphoserine). WD repeat units lie at residues 46–94 (RTRR…HAIP), 95–140 (LRSS…RELA), 141–181 (GHTG…TTFT), 182–223 (GHTG…QTFT), 224–267 (GHES…YSHD), 268–309 (NIIC…GVLA), and 310–340 (GHDN…KIWN). The residue at position 266 (His-266) is a Phosphohistidine.

It belongs to the WD repeat G protein beta family. G proteins are composed of 3 units, alpha, beta and gamma. The heterodimer formed by GNB1 and GNG2 interacts with ARHGEF5. The heterodimer formed by GNB1 and GNG2 interacts with GRK2. Forms a complex with GNAO1 and GNG3. Interacts with ARHGEF18 and RASD2. Forms complexes with TAS2R14 and G-proteins; these complexes play a role in the perception of bitterness. Component of the TAS2R14-GNAI1 complex, consisting of TAS2R14, GNAI1, GNB1 and GNG2. Component of the TAS2R14-GNAT3 complex, consisting of TAS2R14, GNAT3, GNB1 and GNG2. Component of the TAS2R14-GNAS2 complex, consisting of TAS2R14, GNAS2, GNB1 and GNG2. In terms of processing, phosphorylation at His-266 by NDKB contributes to G protein activation by increasing the high energetic phosphate transfer onto GDP.

Guanine nucleotide-binding proteins (G proteins) are involved as a modulator or transducer in various transmembrane signaling systems. The beta and gamma chains are required for the GTPase activity, for replacement of GDP by GTP, and for G protein-effector interaction. In Bos taurus (Bovine), this protein is Guanine nucleotide-binding protein G(I)/G(S)/G(T) subunit beta-1 (GNB1).